The chain runs to 294 residues: Nucleotide-binding protein lp_0779 (294 aa).

12-19 (GMSGAGKT) provides a ligand contact to ATP. 62 to 65 (DLRS) is a binding site for GTP.

This sequence belongs to the RapZ-like family.

In terms of biological role, displays ATPase and GTPase activities. This chain is Nucleotide-binding protein lp_0779, found in Lactiplantibacillus plantarum (strain ATCC BAA-793 / NCIMB 8826 / WCFS1) (Lactobacillus plantarum).